Reading from the N-terminus, the 333-residue chain is Glyceraldehyde-3-phosphate dehydrogenase (333 aa).

NAD(+)-binding positions include Arg11 to Ile12, Asp35, and Thr121. Residues Ser151–Thr153 and Thr182 contribute to the D-glyceraldehyde 3-phosphate site. The active-site Nucleophile is the Cys152. Asn183 contributes to the NAD(+) binding site. D-glyceraldehyde 3-phosphate is bound by residues Arg197, Thr210–Gly211, and Arg233. NAD(+) is bound at residue Asn315.

It belongs to the glyceraldehyde-3-phosphate dehydrogenase family. Homotetramer.

It is found in the cytoplasm. The enzyme catalyses D-glyceraldehyde 3-phosphate + phosphate + NAD(+) = (2R)-3-phospho-glyceroyl phosphate + NADH + H(+). It functions in the pathway carbohydrate degradation; glycolysis; pyruvate from D-glyceraldehyde 3-phosphate: step 1/5. Functionally, catalyzes the oxidative phosphorylation of glyceraldehyde 3-phosphate (G3P) to 1,3-bisphosphoglycerate (BPG) using the cofactor NAD. The first reaction step involves the formation of a hemiacetal intermediate between G3P and a cysteine residue, and this hemiacetal intermediate is then oxidized to a thioester, with concomitant reduction of NAD to NADH. The reduced NADH is then exchanged with the second NAD, and the thioester is attacked by a nucleophilic inorganic phosphate to produce BPG. In Thermotoga maritima (strain ATCC 43589 / DSM 3109 / JCM 10099 / NBRC 100826 / MSB8), this protein is Glyceraldehyde-3-phosphate dehydrogenase (gap).